The sequence spans 273 residues: Dermonecrotic toxin LhSicTox-alphaIA1ii (273 aa).

Residue His-5 is part of the active site. Mg(2+) is bound by residues Glu-25 and Asp-27. His-41 functions as the Nucleophile in the catalytic mechanism. Disulfide bonds link Cys-45–Cys-51 and Cys-47–Cys-190. Mg(2+) is bound at residue Asp-85.

The protein belongs to the arthropod phospholipase D family. Class II subfamily. Mg(2+) is required as a cofactor. As to expression, expressed by the venom gland.

Its subcellular location is the secreted. The enzyme catalyses an N-(acyl)-sphingosylphosphocholine = an N-(acyl)-sphingosyl-1,3-cyclic phosphate + choline. It carries out the reaction an N-(acyl)-sphingosylphosphoethanolamine = an N-(acyl)-sphingosyl-1,3-cyclic phosphate + ethanolamine. It catalyses the reaction a 1-acyl-sn-glycero-3-phosphocholine = a 1-acyl-sn-glycero-2,3-cyclic phosphate + choline. The catalysed reaction is a 1-acyl-sn-glycero-3-phosphoethanolamine = a 1-acyl-sn-glycero-2,3-cyclic phosphate + ethanolamine. Dermonecrotic toxins cleave the phosphodiester linkage between the phosphate and headgroup of certain phospholipids (sphingolipid and lysolipid substrates), forming an alcohol (often choline) and a cyclic phosphate. This toxin acts on sphingomyelin (SM). It may also act on ceramide phosphoethanolamine (CPE), lysophosphatidylcholine (LPC) and lysophosphatidylethanolamine (LPE), but not on lysophosphatidylserine (LPS), and lysophosphatidylglycerol (LPG). It acts by transphosphatidylation, releasing exclusively cyclic phosphate products as second products. Induces dermonecrosis, hemolysis, increased vascular permeability, edema, inflammatory response, and platelet aggregation. The sequence is that of Dermonecrotic toxin LhSicTox-alphaIA1ii from Loxosceles hirsuta (Recluse spider).